Here is a 406-residue protein sequence, read N- to C-terminus: MNGFAVIPSVTTTTTSGEPIASDVARKQNLLELDREGLERFFEDVLGEKRYRAHQVMKWIHHRYVADFEQMTDVGKALRTRLQACAEVRVPRVVFDKHSADGTHKWLLAMGTDRKNAIETVYIPDKGRGTLCVSSQIGCGLNCTFCSTATQGFNRNLTTAEIIGQVWVAARHLGNVPHQQRRLTNVVMMGMGEPLMNFDNVVRAMSVMRDDLGYGLSNKRVTLSTSGLVPMIDRLSTESDVSLAVSLHAPNDKLREQLVPLNKKYPIVELMASCERYLSVNRKRDSVTFEYTLMKGVNDKQEHAHELAKLMRQFDCAMQVKGAAKVNLIPFNPFPGTCYERSTEVDIRAFQKILLDAQILAMVRRTRGDDIDAACGQLKGQVVDRTRRQAEFRRTIEDRVGRDVAA.

Catalysis depends on E119, which acts as the Proton acceptor. Residues 125–370 (DKGRGTLCVS…AMVRRTRGDD (246 aa)) enclose the Radical SAM core domain. An intrachain disulfide couples C132 to C375. C139, C143, and C146 together coordinate [4Fe-4S] cluster. S-adenosyl-L-methionine is bound by residues 192–193 (GE), S224, 246–248 (SLH), and N332. The S-methylcysteine intermediate role is filled by C375.

It belongs to the radical SAM superfamily. RlmN family. It depends on [4Fe-4S] cluster as a cofactor.

The protein localises to the cytoplasm. It carries out the reaction adenosine(2503) in 23S rRNA + 2 reduced [2Fe-2S]-[ferredoxin] + 2 S-adenosyl-L-methionine = 2-methyladenosine(2503) in 23S rRNA + 5'-deoxyadenosine + L-methionine + 2 oxidized [2Fe-2S]-[ferredoxin] + S-adenosyl-L-homocysteine. The catalysed reaction is adenosine(37) in tRNA + 2 reduced [2Fe-2S]-[ferredoxin] + 2 S-adenosyl-L-methionine = 2-methyladenosine(37) in tRNA + 5'-deoxyadenosine + L-methionine + 2 oxidized [2Fe-2S]-[ferredoxin] + S-adenosyl-L-homocysteine. Functionally, specifically methylates position 2 of adenine 2503 in 23S rRNA and position 2 of adenine 37 in tRNAs. m2A2503 modification seems to play a crucial role in the proofreading step occurring at the peptidyl transferase center and thus would serve to optimize ribosomal fidelity. This Xylella fastidiosa (strain Temecula1 / ATCC 700964) protein is Dual-specificity RNA methyltransferase RlmN.